We begin with the raw amino-acid sequence, 217 residues long: Glutathione S-transferase U20 (217 aa).

A GST N-terminal domain is found at 3–82 (NLPILLDYWP…YVDEAWPEKN (80 aa)). Glutathione is bound by residues serine 13, isoleucine 54, and serine 67. The region spanning 88–208 (DPYGRAQARF…LPDSEKIVAY (121 aa)) is the GST C-terminal domain.

The protein belongs to the GST superfamily. Tau family. As to quaternary structure, homodimerization. Interacts with JAR1/FIN219 under continuous far red (cFR) light to stimulate JAR1/FIN219 activity and substrate selectivity. As to expression, mostly associated with vascular tissues, especially near hydathodes.

It is found in the nucleus. The protein localises to the cytoplasm. Its subcellular location is the cytosol. It catalyses the reaction RX + glutathione = an S-substituted glutathione + a halide anion + H(+). With respect to regulation, activated by JAR1/FIN219. Exhibits glutathione-dependent thiol transferase activities. Can use glutathione (GSH) and 1-chloro-2,4-dinitrobenzene (CDNB) as substrates. Involved in the regulation of far-red light influence on development. Regulator of the interplay between light and JA signaling by increasing JAR1/FIN219 efficiency. Maybe involved in gravitropic signal transduction. The polypeptide is Glutathione S-transferase U20 (Arabidopsis thaliana (Mouse-ear cress)).